Consider the following 1015-residue polypeptide: Translation initiation factor IF-2 (1015 aa).

Disordered regions lie at residues 124-144 (EKEP…EKKV), 159-179 (EVTV…PKPV), 196-230 (KKEE…KEEE), and 250-386 (IDLA…VSEE). 2 stretches are compositionally biased toward basic and acidic residues: residues 196–217 (KKEE…EKPV) and 265–315 (SKEE…DPNG). In terms of domain architecture, tr-type G spans 514–684 (HRAPIVTVMG…LLEAEMLDLK (171 aa)). The G1 stretch occupies residues 523-530 (GHVDHGKT). 523–530 (GHVDHGKT) provides a ligand contact to GTP. Positions 548–552 (GITQH) are G2. A G3 region spans residues 570–573 (DTPG). GTP is bound by residues 570-574 (DTPGH) and 624-627 (NKID). Positions 624–627 (NKID) are G4. Residues 660-662 (SAK) are G5.

This sequence belongs to the TRAFAC class translation factor GTPase superfamily. Classic translation factor GTPase family. IF-2 subfamily.

It is found in the cytoplasm. Its function is as follows. One of the essential components for the initiation of protein synthesis. Protects formylmethionyl-tRNA from spontaneous hydrolysis and promotes its binding to the 30S ribosomal subunits. Also involved in the hydrolysis of GTP during the formation of the 70S ribosomal complex. The chain is Translation initiation factor IF-2 from Bacteroides fragilis (strain ATCC 25285 / DSM 2151 / CCUG 4856 / JCM 11019 / LMG 10263 / NCTC 9343 / Onslow / VPI 2553 / EN-2).